Here is a 340-residue protein sequence, read N- to C-terminus: Lipoyl synthase (340 aa).

[4Fe-4S] cluster is bound by residues C83, C88, C94, C109, C113, C116, and S323. The Radical SAM core domain maps to 95–312 (FSGGTATFMI…AEEGYKMGFK (218 aa)).

Belongs to the radical SAM superfamily. Lipoyl synthase family. It depends on [4Fe-4S] cluster as a cofactor.

The protein localises to the cytoplasm. The catalysed reaction is [[Fe-S] cluster scaffold protein carrying a second [4Fe-4S](2+) cluster] + N(6)-octanoyl-L-lysyl-[protein] + 2 oxidized [2Fe-2S]-[ferredoxin] + 2 S-adenosyl-L-methionine + 4 H(+) = [[Fe-S] cluster scaffold protein] + N(6)-[(R)-dihydrolipoyl]-L-lysyl-[protein] + 4 Fe(3+) + 2 hydrogen sulfide + 2 5'-deoxyadenosine + 2 L-methionine + 2 reduced [2Fe-2S]-[ferredoxin]. It participates in protein modification; protein lipoylation via endogenous pathway; protein N(6)-(lipoyl)lysine from octanoyl-[acyl-carrier-protein]: step 2/2. Functionally, catalyzes the radical-mediated insertion of two sulfur atoms into the C-6 and C-8 positions of the octanoyl moiety bound to the lipoyl domains of lipoate-dependent enzymes, thereby converting the octanoylated domains into lipoylated derivatives. In Pseudomonas fluorescens (strain Pf0-1), this protein is Lipoyl synthase.